Reading from the N-terminus, the 137-residue chain is Large ribosomal subunit protein uL16 (137 aa).

Belongs to the universal ribosomal protein uL16 family. As to quaternary structure, part of the 50S ribosomal subunit.

In terms of biological role, binds 23S rRNA and is also seen to make contacts with the A and possibly P site tRNAs. The chain is Large ribosomal subunit protein uL16 from Francisella tularensis subsp. tularensis (strain FSC 198).